Reading from the N-terminus, the 91-residue chain is Small ribosomal subunit protein uS17 (91 aa).

This sequence belongs to the universal ribosomal protein uS17 family. As to quaternary structure, part of the 30S ribosomal subunit.

In terms of biological role, one of the primary rRNA binding proteins, it binds specifically to the 5'-end of 16S ribosomal RNA. The polypeptide is Small ribosomal subunit protein uS17 (Salinispora tropica (strain ATCC BAA-916 / DSM 44818 / JCM 13857 / NBRC 105044 / CNB-440)).